The sequence spans 345 residues: Alpha-N-acetylneuraminide alpha-2,8-sialyltransferase (345 aa).

Residues 1-15 (MKLQGSRMWLCPRTR) are Cytoplasmic-facing. The chain crosses the membrane as a helical; Signal-anchor for type II membrane protein span at residues 16 to 36 (LPVGASALGFLILCWLYVFPG). Over 37–345 (YRLPGHKEMV…KKDVSSQKPH (309 aa)) the chain is Lumenal. N-linked (GlcNAc...) asparagine glycosylation is found at asparagine 59 and asparagine 107. 2 cysteine pairs are disulfide-bonded: cysteine 126–cysteine 275 and cysteine 140–cysteine 335. Residues asparagine 131 and asparagine 154 each coordinate CMP-N-acetyl-beta-neuraminate. Residues asparagine 154 and 176 to 178 (NPS) each bind substrate. Asparagine 233 is a glycosylation site (N-linked (GlcNAc...) asparagine). CMP-N-acetyl-beta-neuraminate is bound by residues serine 262, threonine 263, glycine 264, tryptophan 284, and histidine 298. 262–264 (STG) contributes to the substrate binding site. Histidine 310 functions as the Proton donor/acceptor in the catalytic mechanism.

The protein belongs to the glycosyltransferase 29 family.

The protein localises to the golgi apparatus membrane. The enzyme catalyses an N-acetyl-alpha-neuraminyl-(2-&gt;3)-beta-D-galactosyl derivative + CMP-N-acetyl-beta-neuraminate = an N-acetyl-alpha-neuraminyl-(2-&gt;8)-N-acetyl-alpha-neuraminyl-(2-&gt;3)-beta-D-galactosyl derivative + CMP + H(+). It catalyses the reaction a ganglioside GM3 (d18:1(4E)) + CMP-N-acetyl-beta-neuraminate = a ganglioside GD3 (d18:1(4E)) + CMP + H(+). It carries out the reaction a ganglioside GD3 (d18:1(4E)) + CMP-N-acetyl-beta-neuraminate = a ganglioside GT3 (d18:1(4E)) + CMP + H(+). The catalysed reaction is a ganglioside GD1a (d18:1(4E)) + CMP-N-acetyl-beta-neuraminate = a ganglioside GT1a (d18:1(4E)) + CMP + H(+). The enzyme catalyses a ganglioside GT1b (d18:1(4E)) + CMP-N-acetyl-beta-neuraminate = a ganglioside GQ1b (d18:1(4E)) + CMP + H(+). It catalyses the reaction a ganglioside GM1b (d18:1(4E)) + CMP-N-acetyl-beta-neuraminate = a ganglioside GD1c (d18:1(4E)) + CMP + H(+). It carries out the reaction a ganglioside GD3 + CMP-N-acetyl-beta-neuraminate = a ganglioside GT3 + CMP + H(+). The catalysed reaction is [alpha-N-acetylneuraminyl-(2-&gt;8)](n)-alpha-N-acetylneuraminyl-(2-&gt;8)-alpha-N-acetylneuraminyl-(2-&gt;3)-beta-D-galactosyl-(1-&gt;4)-beta-D-glucosyl-(1&lt;-&gt;1)-ceramide + CMP-N-acetyl-beta-neuraminate = [alpha-N-acetylneuraminyl-(2-&gt;8)](n+1)-alpha-N-acetylneuraminyl-(2-&gt;8)-alpha-N-acetylneuraminyl-(2-&gt;3)-beta-D-galactosyl-(1-&gt;4)-beta-D-glucosyl-(1&lt;-&gt;1)-ceramide + CMP + H(+). The protein operates within protein modification; protein glycosylation. It functions in the pathway lipid metabolism; sphingolipid metabolism. In terms of biological role, catalyzes the addition of sialic acid in alpha 2,8-linkage to the sialic acid moiety of the ganglioside GM3 to form ganglioside GD3; gangliosides are a subfamily of complex glycosphingolipds that contain one or more residues of sialic acid. Glycosphingolipids are required for convergence extension movements during early development. Can catalyze the addition of a second alpha-2,8- sialic acid to GD3 to form GT3. Can use GM1b, GD1a and GT1b as acceptor substrates to synthesize GD1c, GT1a and GQ1b respectively. The polypeptide is Alpha-N-acetylneuraminide alpha-2,8-sialyltransferase (Xenopus tropicalis (Western clawed frog)).